Reading from the N-terminus, the 235-residue chain is uncharacterized protein (235 aa).

Disordered stretches follow at residues 1–36 and 213–235; these read MGMLAPGPLQGRRPRKGHKGQEDAVAPGCKASGRGS and VKTRKSKRRSGEGSHLTTSILEQ.

This is an uncharacterized protein from Homo sapiens (Human).